The chain runs to 427 residues: Ectoine TRAP transporter large permease protein TeaC (427 aa).

The next 12 helical transmembrane spans lie at 13–35 (LLLG…FMMF), 49–69 (MAGI…AADI), 79–99 (LINM…VSTA), 103–123 (TLFG…GSPL), 147–167 (IAFL…SGTS), 172–192 (FIAG…YCVI), 216–236 (LALW…GGIF), 237–257 (SPTE…FVVF), 273–293 (GLIT…SWII), 320–340 (ICVA…ILVL), 356–376 (VLVG…PPFG), and 400–420 (FIFM…IALF).

This sequence belongs to the TRAP transporter large permease family. The complex comprises the extracytoplasmic solute receptor protein TeaA, and the two transmembrane proteins TeaB and TeaC.

It localises to the cell inner membrane. Functionally, part of the tripartite ATP-independent periplasmic (TRAP) transport system TeaABC involved in the uptake of ectoine and hydroxyectoine in response to osmotic upshock. Probably functions as a recovery system for synthesized ectoine that leaks out of the cell. This chain is Ectoine TRAP transporter large permease protein TeaC (teaC), found in Halomonas elongata (strain ATCC 33173 / DSM 2581 / NBRC 15536 / NCIMB 2198 / 1H9).